Reading from the N-terminus, the 99-residue chain is Accessory protein p12I (99 aa).

The helical transmembrane segment at 3–23 (FRLLSPLSPLALTALLLFLLP) threads the bilayer. 2 short sequence motifs (SH3-binding) span residues 4–11 (RLLSPLSP) and 33–38 (RPPPAP). The chain crosses the membrane as a helical span at residues 48–68 (ILSGLLFLLFLPLFFSLPLLL). 2 short sequence motifs (SH3-binding) span residues 70–77 (PSLPITMR) and 88–93 (KAPSQP). Residue Lys88 forms a Glycyl lysine isopeptide (Lys-Gly) (interchain with G-Cter in ubiquitin); in isolate LAF linkage.

Belongs to the HTLV-1 accessory protein p12I family. As to quaternary structure, p12I is a homodimer. Interacts with human CANX, CALR, ATP6V0C, IL2RB, IL2RG. Binds to MHC-I heavy chains HLA-A2, HLA-B7 and HLA-Cw4. In terms of processing, ubiquitinated; a fraction of P12I is degraded via the ubiquitin system.

It localises to the host endoplasmic reticulum membrane. The protein resides in the host Golgi apparatus. Its subcellular location is the host cis-Golgi network membrane. Functionally, p12I is a modulator of T-lymphocyte proliferation and immune function and may contribute to establish a persistent infection. Binds and down-modulates cell surface expression of interleukin-2 receptors IL2RB and IL2RG. Also down-modulates cell surface MHC-I molecules by binding to free immature MHC-I heavy chains in the ER and targeting them to the proteasome for degradation. Binding to IL2RB mediates recruitment of JAK1 and JAK3. As a result of this interaction, p12I increases DNA-binding and transcriptional activity of STAT5. This Homo sapiens (Human) protein is Accessory protein p12I.